Consider the following 374-residue polypeptide: Queuine tRNA-ribosyltransferase (374 aa).

Asp-89 (proton acceptor) is an active-site residue. Residues 89–93, Asp-143, Gln-187, and Gly-214 contribute to the substrate site; that span reads DSGGF. Positions 245-251 are RNA binding; it reads GVGKPED. Residue Asp-264 is the Nucleophile of the active site. The RNA binding; important for wobble base 34 recognition stretch occupies residues 269 to 273; sequence TRNAR. 4 residues coordinate Zn(2+): Cys-302, Cys-304, Cys-307, and His-333.

It belongs to the queuine tRNA-ribosyltransferase family. As to quaternary structure, homodimer. Within each dimer, one monomer is responsible for RNA recognition and catalysis, while the other monomer binds to the replacement base PreQ1. The cofactor is Zn(2+).

The enzyme catalyses 7-aminomethyl-7-carbaguanine + guanosine(34) in tRNA = 7-aminomethyl-7-carbaguanosine(34) in tRNA + guanine. Its pathway is tRNA modification; tRNA-queuosine biosynthesis. Catalyzes the base-exchange of a guanine (G) residue with the queuine precursor 7-aminomethyl-7-deazaguanine (PreQ1) at position 34 (anticodon wobble position) in tRNAs with GU(N) anticodons (tRNA-Asp, -Asn, -His and -Tyr). Catalysis occurs through a double-displacement mechanism. The nucleophile active site attacks the C1' of nucleotide 34 to detach the guanine base from the RNA, forming a covalent enzyme-RNA intermediate. The proton acceptor active site deprotonates the incoming PreQ1, allowing a nucleophilic attack on the C1' of the ribose to form the product. After dissociation, two additional enzymatic reactions on the tRNA convert PreQ1 to queuine (Q), resulting in the hypermodified nucleoside queuosine (7-(((4,5-cis-dihydroxy-2-cyclopenten-1-yl)amino)methyl)-7-deazaguanosine). This chain is Queuine tRNA-ribosyltransferase, found in Shewanella sp. (strain MR-4).